We begin with the raw amino-acid sequence, 663 residues long: uncharacterized protein (663 aa).

The N-terminal stretch at 1 to 29 is a signal peptide; sequence MLDIGVIGRLKFATAFMAMSLLLVPAAEA.

This sequence belongs to the bacterial solute-binding protein 5 family.

The protein localises to the periplasm. In terms of biological role, possible binding-protein with either a transport or enzymatic activity. This is an uncharacterized protein from Sinorhizobium fredii (strain NBRC 101917 / NGR234).